A 438-amino-acid chain; its full sequence is uncharacterized protein (438 aa).

Positions Met1–Ala19 are cleaved as a signal peptide.

This is an uncharacterized protein from Rickettsia conorii (strain ATCC VR-613 / Malish 7).